Reading from the N-terminus, the 449-residue chain is Glutamyl-tRNA reductase (449 aa).

Substrate-binding positions include threonine 58 to arginine 61, serine 121, glutamate 126 to glutamine 128, and glutamine 132. The active-site Nucleophile is cysteine 59. Glycine 203–alanine 208 is a binding site for NADP(+).

It belongs to the glutamyl-tRNA reductase family. In terms of assembly, homodimer.

It carries out the reaction (S)-4-amino-5-oxopentanoate + tRNA(Glu) + NADP(+) = L-glutamyl-tRNA(Glu) + NADPH + H(+). It functions in the pathway porphyrin-containing compound metabolism; protoporphyrin-IX biosynthesis; 5-aminolevulinate from L-glutamyl-tRNA(Glu): step 1/2. Functionally, catalyzes the NADPH-dependent reduction of glutamyl-tRNA(Glu) to glutamate 1-semialdehyde (GSA). In Helicobacter pylori (strain HPAG1), this protein is Glutamyl-tRNA reductase.